The sequence spans 182 residues: Large ribosomal subunit protein uL16 (182 aa).

Residues 140 to 182 are disordered; the sequence is EKPTQVGKAPPKSSFLPSDETETAAAQAGTEASSASSVTPLES. Over residues 162–176 the composition is skewed to low complexity; sequence TAAAQAGTEASSASS.

It belongs to the universal ribosomal protein uL16 family. As to quaternary structure, part of the 50S ribosomal subunit.

Functionally, binds 23S rRNA and is also seen to make contacts with the A and possibly P site tRNAs. This is Large ribosomal subunit protein uL16 from Prochlorococcus marinus (strain SARG / CCMP1375 / SS120).